Consider the following 418-residue polypeptide: Thyroxine-binding globulin (418 aa).

A signal peptide spans 1–20 (MSMFFYLFLLVLGLQATIHC). N-linked (GlcNAc...) asparagine glycans are attached at residues asparagine 24, asparagine 39, asparagine 102, asparagine 168, asparagine 227, and asparagine 256. Residues asparagine 296 and lysine 401 each coordinate thyroxine.

It belongs to the serpin family. Expressed by the liver and secreted in plasma.

It localises to the secreted. Its function is as follows. Major thyroid hormone transport protein in serum. In Rattus norvegicus (Rat), this protein is Thyroxine-binding globulin (Serpina7).